The primary structure comprises 385 residues: Histidinol-phosphate aminotransferase (385 aa).

Lys235 is subject to N6-(pyridoxal phosphate)lysine.

The protein belongs to the class-II pyridoxal-phosphate-dependent aminotransferase family. Histidinol-phosphate aminotransferase subfamily. In terms of assembly, homodimer. Pyridoxal 5'-phosphate is required as a cofactor.

The enzyme catalyses L-histidinol phosphate + 2-oxoglutarate = 3-(imidazol-4-yl)-2-oxopropyl phosphate + L-glutamate. It participates in amino-acid biosynthesis; L-histidine biosynthesis; L-histidine from 5-phospho-alpha-D-ribose 1-diphosphate: step 7/9. In Nocardia farcinica (strain IFM 10152), this protein is Histidinol-phosphate aminotransferase.